The following is a 103-amino-acid chain: Large ribosomal subunit protein uL23 (103 aa).

It belongs to the universal ribosomal protein uL23 family. In terms of assembly, part of the 50S ribosomal subunit. Contacts protein L29, and trigger factor when it is bound to the ribosome.

One of the early assembly proteins it binds 23S rRNA. One of the proteins that surrounds the polypeptide exit tunnel on the outside of the ribosome. Forms the main docking site for trigger factor binding to the ribosome. In Chlorobium phaeovibrioides (strain DSM 265 / 1930) (Prosthecochloris vibrioformis (strain DSM 265)), this protein is Large ribosomal subunit protein uL23.